Reading from the N-terminus, the 1412-residue chain is DNA-directed RNA polymerase subunit beta' (1412 aa).

Residues cysteine 70, cysteine 72, cysteine 85, and cysteine 88 each contribute to the Zn(2+) site. Mg(2+)-binding residues include aspartate 460, aspartate 462, and aspartate 464. 4 residues coordinate Zn(2+): cysteine 819, cysteine 893, cysteine 900, and cysteine 903. The disordered stretch occupies residues 1391-1412; the sequence is AEESFEFGTPETPAAEQQHSGE.

Belongs to the RNA polymerase beta' chain family. The RNAP catalytic core consists of 2 alpha, 1 beta, 1 beta' and 1 omega subunit. When a sigma factor is associated with the core the holoenzyme is formed, which can initiate transcription. It depends on Mg(2+) as a cofactor. Zn(2+) is required as a cofactor.

The catalysed reaction is RNA(n) + a ribonucleoside 5'-triphosphate = RNA(n+1) + diphosphate. Its function is as follows. DNA-dependent RNA polymerase catalyzes the transcription of DNA into RNA using the four ribonucleoside triphosphates as substrates. The polypeptide is DNA-directed RNA polymerase subunit beta' (Paraburkholderia phytofirmans (strain DSM 17436 / LMG 22146 / PsJN) (Burkholderia phytofirmans)).